The chain runs to 590 residues: V-type ATP synthase alpha chain (590 aa).

An ATP-binding site is contributed by 232-239; the sequence is GPFGSGKT.

This sequence belongs to the ATPase alpha/beta chains family.

It catalyses the reaction ATP + H2O + 4 H(+)(in) = ADP + phosphate + 5 H(+)(out). Its function is as follows. Produces ATP from ADP in the presence of a proton gradient across the membrane. The V-type alpha chain is a catalytic subunit. This is V-type ATP synthase alpha chain from Thermoanaerobacter sp. (strain X514).